The sequence spans 338 residues: Phenylalanine--tRNA ligase alpha subunit (338 aa).

Glu253 is a Mg(2+) binding site.

This sequence belongs to the class-II aminoacyl-tRNA synthetase family. Phe-tRNA synthetase alpha subunit type 1 subfamily. Tetramer of two alpha and two beta subunits. It depends on Mg(2+) as a cofactor.

The protein localises to the cytoplasm. The catalysed reaction is tRNA(Phe) + L-phenylalanine + ATP = L-phenylalanyl-tRNA(Phe) + AMP + diphosphate + H(+). The polypeptide is Phenylalanine--tRNA ligase alpha subunit (Pelobacter propionicus (strain DSM 2379 / NBRC 103807 / OttBd1)).